The chain runs to 558 residues: MRSDAIKKGHLKAPNRSLLRACGLKDEDFDKPFIGVANSYIDIIPGHYFLNDYAKIIKDEIRKNGCVPFEFNTIGVDDGIAMGHEGMLYSLPSREIIANSIETVMNAHQLDALICIPNCDKITPGMLMGALRVNVPTIFVSGGPMASGVTKKGEKISLSSVFEAVGAYEAKKISEEEFKDIECSACPSGGSCSGMFTANSMNTLCEAMGIALEGNGTILALSKEREELLRKAARRICEIALDERFKIRNIITQKAVRNAMVVDMAMGGSSNTVLHMLAISREAGVALDIKDLNFISSKVAHIAKIAPSLNSVYMDDIHKAGGVSAVMAEISSRQGHILELDALTITGESLEERLKNAKIKDENIIRKVDNAYSKVGGLAILFGNLAEQGCVIKTAGIIGERKFKGEAVCFNSQDEAIKGIIKGKVKKGNVCVIRYEGPKGGPGMQEMLSPTSLLMGMGLGADVALITDGRFSGATRGLSVGHISPEAAEGGLIGLLKDGDEIEIDVDAYTIHANLSEEEITQRKKEFVLPQKEVPSRWLRMYQKLVSNASKGAVLDME.

Residue D78 participates in Mg(2+) binding. C119 provides a ligand contact to [2Fe-2S] cluster. Mg(2+) is bound by residues D120 and K121. K121 is modified (N6-carboxylysine). C192 contributes to the [2Fe-2S] cluster binding site. Residue E446 coordinates Mg(2+). Catalysis depends on S472, which acts as the Proton acceptor.

It belongs to the IlvD/Edd family. As to quaternary structure, homodimer. It depends on [2Fe-2S] cluster as a cofactor. The cofactor is Mg(2+).

It catalyses the reaction (2R)-2,3-dihydroxy-3-methylbutanoate = 3-methyl-2-oxobutanoate + H2O. It carries out the reaction (2R,3R)-2,3-dihydroxy-3-methylpentanoate = (S)-3-methyl-2-oxopentanoate + H2O. It functions in the pathway amino-acid biosynthesis; L-isoleucine biosynthesis; L-isoleucine from 2-oxobutanoate: step 3/4. It participates in amino-acid biosynthesis; L-valine biosynthesis; L-valine from pyruvate: step 3/4. In terms of biological role, functions in the biosynthesis of branched-chain amino acids. Catalyzes the dehydration of (2R,3R)-2,3-dihydroxy-3-methylpentanoate (2,3-dihydroxy-3-methylvalerate) into 2-oxo-3-methylpentanoate (2-oxo-3-methylvalerate) and of (2R)-2,3-dihydroxy-3-methylbutanoate (2,3-dihydroxyisovalerate) into 2-oxo-3-methylbutanoate (2-oxoisovalerate), the penultimate precursor to L-isoleucine and L-valine, respectively. The polypeptide is Dihydroxy-acid dehydratase (Campylobacter jejuni subsp. jejuni serotype O:23/36 (strain 81-176)).